We begin with the raw amino-acid sequence, 318 residues long: Ribosomal protein L11 methyltransferase (318 aa).

Threonine 161, glycine 182, aspartate 204, and asparagine 247 together coordinate S-adenosyl-L-methionine.

It belongs to the methyltransferase superfamily. PrmA family.

The protein localises to the cytoplasm. It catalyses the reaction L-lysyl-[protein] + 3 S-adenosyl-L-methionine = N(6),N(6),N(6)-trimethyl-L-lysyl-[protein] + 3 S-adenosyl-L-homocysteine + 3 H(+). Functionally, methylates ribosomal protein L11. This is Ribosomal protein L11 methyltransferase from Moorella thermoacetica (strain ATCC 39073 / JCM 9320).